Consider the following 212-residue polypeptide: Transcriptional regulator GfcR (212 aa).

The protein belongs to the purine/pyrimidine phosphoribosyltransferase family. GfcR subfamily.

Functionally, DNA-binding transcriptional regulator that functions as a regulator of central sugar catabolic pathways. This is Transcriptional regulator GfcR from Halobacterium salinarum (strain ATCC 29341 / DSM 671 / R1).